A 98-amino-acid chain; its full sequence is Putative pterin-4-alpha-carbinolamine dehydratase (98 aa).

It belongs to the pterin-4-alpha-carbinolamine dehydratase family.

It catalyses the reaction (4aS,6R)-4a-hydroxy-L-erythro-5,6,7,8-tetrahydrobiopterin = (6R)-L-erythro-6,7-dihydrobiopterin + H2O. This chain is Putative pterin-4-alpha-carbinolamine dehydratase, found in Roseobacter denitrificans (strain ATCC 33942 / OCh 114) (Erythrobacter sp. (strain OCh 114)).